The following is a 476-amino-acid chain: UPF0481 protein At3g47200 (476 aa).

The disordered stretch occupies residues 1 to 24; it reads MADKTDIISSSSDKASPPPPSAFR. Helical transmembrane passes span 133–153 and 439–459; these read LMFM…IMSG and AVLF…LSYL.

This sequence belongs to the UPF0481 family.

It is found in the membrane. This is UPF0481 protein At3g47200 from Arabidopsis thaliana (Mouse-ear cress).